Reading from the N-terminus, the 252-residue chain is 2-succinyl-6-hydroxy-2,4-cyclohexadiene-1-carboxylate synthase (252 aa).

It belongs to the AB hydrolase superfamily. MenH family. In terms of assembly, monomer.

It carries out the reaction 5-enolpyruvoyl-6-hydroxy-2-succinyl-cyclohex-3-ene-1-carboxylate = (1R,6R)-6-hydroxy-2-succinyl-cyclohexa-2,4-diene-1-carboxylate + pyruvate. Its pathway is quinol/quinone metabolism; 1,4-dihydroxy-2-naphthoate biosynthesis; 1,4-dihydroxy-2-naphthoate from chorismate: step 3/7. It functions in the pathway quinol/quinone metabolism; menaquinone biosynthesis. Its function is as follows. Catalyzes a proton abstraction reaction that results in 2,5-elimination of pyruvate from 2-succinyl-5-enolpyruvyl-6-hydroxy-3-cyclohexene-1-carboxylate (SEPHCHC) and the formation of 2-succinyl-6-hydroxy-2,4-cyclohexadiene-1-carboxylate (SHCHC). The chain is 2-succinyl-6-hydroxy-2,4-cyclohexadiene-1-carboxylate synthase from Shigella boydii serotype 4 (strain Sb227).